Consider the following 284-residue polypeptide: D-tagatose-1,6-bisphosphate aldolase subunit GatY (284 aa).

D82 (proton donor) is an active-site residue. Zn(2+) is bound by residues H83 and H180. G181 contributes to the dihydroxyacetone phosphate binding site. H208 contributes to the Zn(2+) binding site. Dihydroxyacetone phosphate is bound by residues 209–211 (GAS) and 230–233 (NVAT).

It belongs to the class II fructose-bisphosphate aldolase family. TagBP aldolase GatY subfamily. Forms a complex with GatZ. Zn(2+) is required as a cofactor.

The enzyme catalyses D-tagatofuranose 1,6-bisphosphate = D-glyceraldehyde 3-phosphate + dihydroxyacetone phosphate. Its pathway is carbohydrate metabolism; D-tagatose 6-phosphate degradation; D-glyceraldehyde 3-phosphate and glycerone phosphate from D-tagatose 6-phosphate: step 2/2. Functionally, catalytic subunit of the tagatose-1,6-bisphosphate aldolase GatYZ, which catalyzes the reversible aldol condensation of dihydroxyacetone phosphate (DHAP or glycerone-phosphate) with glyceraldehyde 3-phosphate (G3P) to produce tagatose 1,6-bisphosphate (TBP). Requires GatZ subunit for full activity and stability. Is involved in the catabolism of galactitol. In Escherichia coli O17:K52:H18 (strain UMN026 / ExPEC), this protein is D-tagatose-1,6-bisphosphate aldolase subunit GatY.